A 351-amino-acid chain; its full sequence is MASTGSQASDIDKILGFFSDGAPPTKKPRKLLPSLKTKKPRELVLVIGTGISAAVAPQVPALKSWKGLIQALLDAAIDFDLLEDEESKKFQKCLHEDKNLVHVAHDLIQKLSPRTSNVRSTFFKDCLYEVFDDLESKMEDSGKQLLQSVLHLMENGALVLTTNFDNLLELYAADQGKQLESLDLTDEKKVLEWAQEKRKLSVLHIHGVYTNPSGIVLHPAGYQNVLRNTEVMREIQKLYENKSFLFLGCGWTVDDTTFQALFLEAVKHKSDLEHFMLVRRGDVDEFKKLRENMLDKGIKVISYGNDYADLPEYFKRLTCEISTRGRSAGIVREGQLNGSSTAHSEIRDHST.

At Ala2 the chain carries N-acetylalanine. Ser9 carries the phosphoserine modification.

The protein belongs to the FAM118 family.

The protein resides in the nucleus. It is found in the cajal body. Its function is as follows. May play a role in Cajal bodies formation. The sequence is that of Protein FAM118B (FAM118B) from Bos taurus (Bovine).